The following is a 620-amino-acid chain: Aspartic protease 1 (620 aa).

At Met1–Ser110 the chain is on the cytoplasmic side. Positions Met1 to Gly258 are excised as a propeptide. Residues Tyr27–Leu31 are important for proper cellular trafficking. Residues Val111–Phe131 form a helical; Signal-anchor for type II membrane protein membrane-spanning segment. Topologically, residues Ser132–Asn620 are lumenal. A disordered region spans residues Thr138–Arg174. The span at Pro156–Arg165 shows a compositional bias: polar residues. The region spanning Tyr275–Ala616 is the Peptidase A1 domain. Active-site residues include Asp293 and Asp476. The cysteines at positions 513 and 550 are disulfide-linked.

It belongs to the peptidase A1 family. Post-translationally, proteolytically cleaved into the soluble active mature form by, at least, cysteine protease CPL. Undergoes at least four processing steps; the first cleavage removes the propeptide resulting in the production of a soluble 45 kDa protein, which is further processed into a 35 kDa form followed by an additional processing into the final active 30 kDa form.

Its subcellular location is the membrane. It is found in the vacuole. Functionally, aspartyl protease which is dispensable for protein degradation in the vacuolar compartment (VAC) or for tachyzoite and bradyzoite viability. This chain is Aspartic protease 1, found in Toxoplasma gondii.